A 382-amino-acid chain; its full sequence is tRNA-specific 2-thiouridylase MnmA (382 aa).

Residues 34–41 and leucine 60 each bind ATP; that span reads AMSGGVDS. The active-site Nucleophile is the cysteine 128. A disulfide bridge links cysteine 128 with cysteine 224. Glycine 152 provides a ligand contact to ATP. Residues 174-176 are interaction with tRNA; that stretch reads RDQ. The active-site Cysteine persulfide intermediate is cysteine 224.

The protein belongs to the MnmA/TRMU family.

It localises to the cytoplasm. It carries out the reaction S-sulfanyl-L-cysteinyl-[protein] + uridine(34) in tRNA + AH2 + ATP = 2-thiouridine(34) in tRNA + L-cysteinyl-[protein] + A + AMP + diphosphate + H(+). Its function is as follows. Catalyzes the 2-thiolation of uridine at the wobble position (U34) of tRNA, leading to the formation of s(2)U34. This Sphingopyxis alaskensis (strain DSM 13593 / LMG 18877 / RB2256) (Sphingomonas alaskensis) protein is tRNA-specific 2-thiouridylase MnmA.